Here is a 248-residue protein sequence, read N- to C-terminus: ATP synthase subunit a, chloroplastic (248 aa).

The next 5 helical transmembrane spans lie at 37-57 (GQVLITSWVVIGILLTVAFLG), 96-116 (VPFVGTLFLFIFVSNWSGALV), 135-155 (INTTVALALLTSGAYFYAGFH), 200-220 (LVVAVLVSLVPLVVPIPMMFL), and 221-241 (GLFTSGIQALIFATLAAAYIG).

It belongs to the ATPase A chain family. As to quaternary structure, F-type ATPases have 2 components, CF(1) - the catalytic core - and CF(0) - the membrane proton channel. CF(1) has five subunits: alpha(3), beta(3), gamma(1), delta(1), epsilon(1). CF(0) has four main subunits: a, b, b' and c.

Its subcellular location is the plastid. The protein localises to the chloroplast thylakoid membrane. Key component of the proton channel; it plays a direct role in the translocation of protons across the membrane. This chain is ATP synthase subunit a, chloroplastic, found in Staurastrum punctulatum (Green alga).